Reading from the N-terminus, the 415-residue chain is ATP-dependent Clp protease ATP-binding subunit ClpX (415 aa).

One can recognise a ClpX-type ZB domain in the interval 1 to 54 (MARNRMGGALICSFCNKPESSERFVVPGPGGIAICDRCVDLCESYIKSYKTVRP). C12, C15, C35, and C38 together coordinate Zn(2+). 117-124 (PTGSGKTL) provides a ligand contact to ATP.

This sequence belongs to the ClpX chaperone family. As to quaternary structure, component of the ClpX-ClpP complex. Forms a hexameric ring that, in the presence of ATP, binds to fourteen ClpP subunits assembled into a disk-like structure with a central cavity, resembling the structure of eukaryotic proteasomes.

Functionally, ATP-dependent specificity component of the Clp protease. It directs the protease to specific substrates. Can perform chaperone functions in the absence of ClpP. In Treponema denticola (strain ATCC 35405 / DSM 14222 / CIP 103919 / JCM 8153 / KCTC 15104), this protein is ATP-dependent Clp protease ATP-binding subunit ClpX.